A 375-amino-acid chain; its full sequence is FK506-binding protein 4 (375 aa).

Disordered stretches follow at residues 55-78 (GFED…EEEI) and 127-265 (PPDF…SKMT). Composition is skewed to acidic residues over residues 56 to 66 (FEDDYDEEEQE) and 131 to 173 (FDQD…DPDR). Residues 196–216 (DSKKRAAEKPVKETAAKKLKA) are compositionally biased toward basic and acidic residues. Over residues 217–230 (DASAASAASTPTKA) the composition is skewed to low complexity. The segment covering 231–261 (IETKGEKQTKGAKDTKPKSETVEKKTVDKST) has biased composition (basic and acidic residues). Residues 289 to 375 (GQKVGMRYVG…VFDVKLVEIK (87 aa)) enclose the PPIase FKBP-type domain.

The protein belongs to the FKBP-type PPIase family. FKBP3/4 subfamily. Binds to histones H3 and H4.

It localises to the nucleus. It carries out the reaction [protein]-peptidylproline (omega=180) = [protein]-peptidylproline (omega=0). With respect to regulation, inhibited by both FK506 and rapamycin. Its function is as follows. PPIase that acts as a histone chaperone. Histone proline isomerase that increases the rate of cis-trans isomerization at prolines on the histone H3 N-terminal tail. Proline isomerization influences H3 methylation thereby regulating gene expression. The protein is FK506-binding protein 4 (FPR4) of Mycosarcoma maydis (Corn smut fungus).